The following is a 195-amino-acid chain: Thymidine kinase (195 aa).

ATP is bound by residues 15 to 22 and 88 to 91; these read GSMFSGKS and DEVQ. Glu89 serves as the catalytic Proton acceptor. Cys145, Cys148, Cys183, and Xaa186 together coordinate Zn(2+).

The protein belongs to the thymidine kinase family. As to quaternary structure, homotetramer.

It localises to the cytoplasm. The catalysed reaction is thymidine + ATP = dTMP + ADP + H(+). The polypeptide is Thymidine kinase (Bacillus cereus (strain ATCC 10987 / NRS 248)).